The primary structure comprises 486 residues: UDP-N-acetylmuramate--L-alanine ligase (486 aa).

Gly126–Thr132 serves as a coordination point for ATP.

Belongs to the MurCDEF family.

The protein localises to the cytoplasm. It carries out the reaction UDP-N-acetyl-alpha-D-muramate + L-alanine + ATP = UDP-N-acetyl-alpha-D-muramoyl-L-alanine + ADP + phosphate + H(+). Its pathway is cell wall biogenesis; peptidoglycan biosynthesis. Its function is as follows. Cell wall formation. The polypeptide is UDP-N-acetylmuramate--L-alanine ligase (Pectobacterium carotovorum subsp. carotovorum (strain PC1)).